The following is a 216-amino-acid chain: uncharacterized protein (216 aa).

The 4Fe-4S ferredoxin-type domain maps to 18–47; that stretch reads PPDSPIEDRCGSCNICVDSCPTGALVQGGQ. 7 residues coordinate [4Fe-4S] cluster: Cys27, Cys30, Cys33, Cys37, Cys79, Cys82, and Cys86.

This is an uncharacterized protein from Geobacillus stearothermophilus (Bacillus stearothermophilus).